The sequence spans 77 residues: MAADKQNLQDAFLNHVRKAKVPVTIFLINGVKLQGVITWFDNFCVLLRRDGQSQLVYKHAISTIMPGQPINLYEGDD.

A Sm domain is found at Asp10 to Ile70.

This sequence belongs to the Hfq family. Homohexamer.

Its function is as follows. RNA chaperone that binds small regulatory RNA (sRNAs) and mRNAs to facilitate mRNA translational regulation in response to envelope stress, environmental stress and changes in metabolite concentrations. Also binds with high specificity to tRNAs. The chain is RNA-binding protein Hfq from Cereibacter sphaeroides (strain ATCC 17029 / ATH 2.4.9) (Rhodobacter sphaeroides).